The sequence spans 183 residues: Potassium-transporting ATPase KdpC subunit (183 aa).

Residues 11 to 31 (LILLLAVVTGALYPLAVTGVA) traverse the membrane as a helical segment.

It belongs to the KdpC family. The system is composed of three essential subunits: KdpA, KdpB and KdpC.

The protein resides in the cell inner membrane. In terms of biological role, part of the high-affinity ATP-driven potassium transport (or Kdp) system, which catalyzes the hydrolysis of ATP coupled with the electrogenic transport of potassium into the cytoplasm. This subunit acts as a catalytic chaperone that increases the ATP-binding affinity of the ATP-hydrolyzing subunit KdpB by the formation of a transient KdpB/KdpC/ATP ternary complex. This Pseudomonas putida (strain W619) protein is Potassium-transporting ATPase KdpC subunit.